The chain runs to 390 residues: Two-component response regulator ORR29 (390 aa).

A Response regulatory domain is found at 13–130 (SAMVIDEDKC…TIKNLWQYVD (118 aa)). 4-aspartylphosphate is present on Asp-65. Positions 169 to 226 (KKYYLMWTPHLQKKFLHALQILGKDASPKNIKKIMGVDNIDCRQIAAHLQKHRLRLTK) form a DNA-binding region, myb-like GARP. Disordered stretches follow at residues 233–271 (FTTDTSKDESNSRIGPAESHHVCRNASTLQPRSNTQPTE) and 303–339 (SKHSSDPSGDEDEQVVVGGDQDGCANEANDIDSSGDH). Positions 257-271 (NASTLQPRSNTQPTE) are enriched in polar residues.

The protein belongs to the ARR family. Type-B subfamily. Post-translationally, two-component system major event consists of a His-to-Asp phosphorelay between a sensor histidine kinase (HK) and a response regulator (RR). In plants, the His-to-Asp phosphorelay involves an additional intermediate named Histidine-containing phosphotransfer protein (HPt). This multistep phosphorelay consists of a His-Asp-His-Asp sequential transfer of a phosphate group between first a His and an Asp of the HK protein, followed by the transfer to a conserved His of the HPt protein and finally the transfer to an Asp in the receiver domain of the RR protein.

Its subcellular location is the cytoplasm. It is found in the cytosol. The protein localises to the nucleus. Its function is as follows. Transcriptional activator that binds specific DNA sequence. Functions as a response regulator involved in His-to-Asp phosphorelay signal transduction system. Phosphorylation of the Asp residue in the receiver domain activates the ability of the protein to promote the transcription of target genes. May directly activate some type-A response regulators in response to cytokinins. Functions as a response regulator in response to cytokinins. The chain is Two-component response regulator ORR29 from Oryza sativa subsp. japonica (Rice).